Here is a 262-residue protein sequence, read N- to C-terminus: Sepiapterin reductase (262 aa).

Position 1 is an N-acetylmethionine (Met-1). NADP(+) is bound at residue Gly-15–Gly-21. A Phosphoserine modification is found at Ser-33. Arg-43–Ser-44 serves as a coordination point for NADP(+). Ser-46 carries the phosphoserine; by CaMK2; in vitro modification. Asp-70–Leu-71 provides a ligand contact to NADP(+). Residues Ser-158–Leu-159 and Tyr-171 contribute to the substrate site. Lys-175 contributes to the NADP(+) binding site. Ser-196 carries the phosphoserine; by CaMK2; in vitro modification. Position 200 (Gly-200) interacts with substrate. Leu-202–Gln-207 lines the NADP(+) pocket. Ser-214 is modified (phosphoserine; by CaMK2; in vitro). Position 258 (Asp-258) interacts with substrate.

This sequence belongs to the sepiapterin reductase family. As to quaternary structure, homodimer. In terms of processing, in vitro phosphorylation of Ser-46, Ser-196 and Ser-214 by CaMK2 does not change kinetic parameters.

It is found in the cytoplasm. The catalysed reaction is L-erythro-7,8-dihydrobiopterin + NADP(+) = L-sepiapterin + NADPH + H(+). It catalyses the reaction (6R)-L-erythro-5,6,7,8-tetrahydrobiopterin + 2 NADP(+) = 6-pyruvoyl-5,6,7,8-tetrahydropterin + 2 NADPH + 2 H(+). Functionally, catalyzes the final one or two reductions in tetra-hydrobiopterin biosynthesis to form 5,6,7,8-tetrahydrobiopterin. This Rattus norvegicus (Rat) protein is Sepiapterin reductase (Spr).